The following is a 1210-amino-acid chain: MAIAEVIGFFTLVCVIWYWVYKKHKNLQLKICRSSIESSSSSSSLSSPPSLSSPISRTWTHQVFPSFRGEDVRKGFLSHIQKEFKSKGIVPFIDDEMKRGESIGPGLFQAIRESKIAIVLLSKNYASSSWCLNELVEIMNCREEIGQTVMTVFYQVDPSDVRKQTGDFGKAFKKTCVGKTQEVKQRWSRALMDVANILGQDSRKWDKEADMIVKVAKDVSDVLSYTPSRDFDDYVGIRPHITRINSLLCLESSDVRMIGILGPPGIGKTTIARVLYDQISEKFQFSAFIENIRLSYWKGWHDEGNLDFPVEIMTGDRQRKLNLQRRLLSELFNQKDIQVRHLGAVQERLRDHKVLVILDGVDQLEQLTALAKETQWFGYGSRIIITTQDQRLLRAHEINHVYKVDLPATDEALQIFCLYAFGQKFPYDGFKKLAREFTALAGELPLGLRVLGSYLRGMSLEEWKNALPRLRTSLDGEIEKTLRFAYNVLSDKDKSLFLHIACLFNGCQVNHVKQWLANSSLDVNHGFEVLSNKSLISTDMGLVRMHSLLQQLGVDIVRKQSIGEPEKRQFLVDVNEISDVITDNTGTGTILGIMLHVSKIEDVLVIEETVFDRMTNLQFLILDECLRDKLNLPLGLNCLPRKIRLLRWDYCPLSIWPSKFSAKFLVELIMRANKFEKLWEGIQPLKNLKRMELGDARNLKEIPDLSNATNLESLLLSFCTSLLEIPSSIRGTTNLKELDLGGCASLVKLSSCICNATSLEELNLSACSNLVELPCALPGDSNMRSLSKLLLNGSSRLKTFPEISTNIQELNLSGTAIEEVPSSIRLWSRLDKLDMSRCKNLKMFPPVPDGISVLNLSETEIEDIPPWVENLSQLRHFVMIRCKKLDNISLSRISKMEGVHCLQITRGDEDVSGDSIVNIRWYSNFPNQWTLQSDMLQICLPELVYTSPVSLHFISNEFKTIPDCIKNLSQLHQLSFYRCHKLVSLPQLSDCLSSLDAENCVSLETIDGSFHNPDIRLNFLNCNNLNQEARELIQKSVCKHALLPSGEVPAYFIHRAIGDSVTIHLKERHLPLYLIFKASLVLFNDDEINYDYDDDDDDDYDEEVIVYGDYDSYPHSDDYTKQETMRLSCRVEGKQNGLTIQYGSSVHLLPTPHRYTEHVYIFEASFSLGECNSPEAESELVFDFKVHDYFWAIKECGLRLLELPHAHGDD.

The region spanning 59 to 223 (WTHQVFPSFR…KVAKDVSDVL (165 aa)) is the TIR domain. The active site involves E134. An NB-ARC domain is found at 241–511 (ITRINSLLCL…CLFNGCQVNH (271 aa)). 9 LRR repeats span residues 662 to 685 (AKFL…IQPL), 686 to 709 (KNLK…SNAT), 711 to 732 (LESL…IRGT), 756 to 780 (ATSL…LPGD), 783 to 804 (MRSL…PEIS), 805 to 828 (TNIQ…RLWS), 830 to 848 (LDKL…PPVP), 849 to 873 (DGIS…NLSQ), and 940 to 970 (LPEL…NLSQ).

It belongs to the disease resistance NB-LRR family. As to quaternary structure, interacts with DSC1.

The enzyme catalyses NAD(+) + H2O = ADP-D-ribose + nicotinamide + H(+). In terms of biological role, TIR-NB-LRR receptor-like protein involved in plant defense. Acts as a trigger of hypersensitive response (HR). Functions as a guard of CAMTA3, a negative regulator of immunity, during pathogen infection. This is Disease resistance-like protein DSC2 from Arabidopsis thaliana (Mouse-ear cress).